Consider the following 486-residue polypeptide: Siroheme synthase (486 aa).

The precorrin-2 dehydrogenase /sirohydrochlorin ferrochelatase stretch occupies residues 1-204; sequence MNYLPIFVDL…HQIEQAEALV (204 aa). NAD(+) is bound by residues 22 to 23 and 43 to 44; these read HI and EK. Residue Ser128 is modified to Phosphoserine. Residues 216 to 486 are uroporphyrinogen-III C-methyltransferase; the sequence is GEVSLVGAGP…NKETHWKQAA (271 aa). Pro225 contributes to the S-adenosyl-L-methionine binding site. Asp248 acts as the Proton acceptor in catalysis. Lys270 acts as the Proton donor in catalysis. S-adenosyl-L-methionine is bound by residues 301-303, Val306, 331-332, Met383, and Gly412; these read GGD and TA.

This sequence in the N-terminal section; belongs to the precorrin-2 dehydrogenase / sirohydrochlorin ferrochelatase family. The protein in the C-terminal section; belongs to the precorrin methyltransferase family.

It catalyses the reaction uroporphyrinogen III + 2 S-adenosyl-L-methionine = precorrin-2 + 2 S-adenosyl-L-homocysteine + H(+). The enzyme catalyses precorrin-2 + NAD(+) = sirohydrochlorin + NADH + 2 H(+). The catalysed reaction is siroheme + 2 H(+) = sirohydrochlorin + Fe(2+). It functions in the pathway cofactor biosynthesis; adenosylcobalamin biosynthesis; precorrin-2 from uroporphyrinogen III: step 1/1. It participates in cofactor biosynthesis; adenosylcobalamin biosynthesis; sirohydrochlorin from precorrin-2: step 1/1. The protein operates within porphyrin-containing compound metabolism; siroheme biosynthesis; precorrin-2 from uroporphyrinogen III: step 1/1. Its pathway is porphyrin-containing compound metabolism; siroheme biosynthesis; siroheme from sirohydrochlorin: step 1/1. It functions in the pathway porphyrin-containing compound metabolism; siroheme biosynthesis; sirohydrochlorin from precorrin-2: step 1/1. Its function is as follows. Multifunctional enzyme that catalyzes the SAM-dependent methylations of uroporphyrinogen III at position C-2 and C-7 to form precorrin-2 via precorrin-1. Then it catalyzes the NAD-dependent ring dehydrogenation of precorrin-2 to yield sirohydrochlorin. Finally, it catalyzes the ferrochelation of sirohydrochlorin to yield siroheme. This chain is Siroheme synthase, found in Actinobacillus pleuropneumoniae serotype 3 (strain JL03).